Here is a 309-residue protein sequence, read N- to C-terminus: Zinc transporter ZIPB (309 aa).

Over 1-22 (MNQPSSLAADLRGAWHAQAQSH) the chain is Periplasmic. A helical membrane pass occupies residues 23–50 (PLITLGLAASAAGVVLLLVAGIVNALTG). At 51 to 55 (ENRVH) the chain is on the extracellular side. The chain crosses the membrane as a helical span at residues 56-81 (VGYAVLGGAAGFAATALGALMALGLR). The Periplasmic portion of the chain corresponds to 82–83 (AI). A helical transmembrane segment spans residues 84–119 (SARTQDAMLGFAAGMMLAASAFSLILPGLDAAGTIV). Zn(2+) is bound at residue aspartate 89. Methionine 99 lines the Cd(2+) pocket. The Extracellular portion of the chain corresponds to 120 to 121 (GP). A helical transmembrane segment spans residues 122-145 (GPAAAAVVALGLGLGVLLMLGLDY). Aspartate 144 contributes to the Zn(2+) binding site. Cd(2+) is bound at residue aspartate 144. Residues 146–165 (FTPHEHERTGHQGPEAARVN) are Periplasmic-facing. The helical transmembrane segment at 166–190 (RVWLFVLTIILHNLPEGMAIGVSFA) threads the bilayer. Histidine 177 contacts Zn(2+). Cd(2+) contacts are provided by histidine 177, asparagine 178, and glutamate 181. Glutamate 181 is a Zn(2+) binding site. The Extracellular portion of the chain corresponds to 191–192 (TG). Residues 193–222 (DLRIGLPLTSAIAIQDVPEGLAVALALRAV) form a helical membrane-spanning segment. Glutamine 207 is a binding site for Zn(2+). Positions 207, 208, and 211 each coordinate Cd(2+). Glutamate 211 is a Zn(2+) binding site. The Periplasmic portion of the chain corresponds to 223–224 (GL). Residues 225-251 (PIGRAVLVAVASGLMEPLGALVGVGIS) traverse the membrane as a helical segment. Glutamate 240 serves as a coordination point for Cd(2+). The Extracellular segment spans residues 252–255 (SGFA). The helical transmembrane segment at 256-275 (LAYPISMGLAAGAMIFVVSH) threads the bilayer. Zn(2+) is bound by residues histidine 275, glutamate 276, and histidine 286. Histidine 275 provides a ligand contact to Cd(2+). Over 276 to 287 (EVIPETHRNGHE) the chain is Periplasmic. The helical transmembrane segment at 288 to 308 (TTATVGLMAGFALMMFLDTAL) threads the bilayer. A topological domain (extracellular) is located at residue glycine 309.

This sequence belongs to the ZIP transporter (TC 2.A.5) family. Homodimer. Also exists as a monomer.

It localises to the cell inner membrane. The catalysed reaction is Zn(2+)(in) = Zn(2+)(out). The enzyme catalyses Cd(2+)(in) = Cd(2+)(out). Its function is as follows. Selective electrodiffusional channel that mediates the uptake of Zn(2+). Exploits in vivo zinc concentration gradients (maintained by cellular zinc homeostasis) to passively move zinc ions into the cytoplasm. ZIPB-mediated zinc flux is dependent upon pH, but independent of the proton motive force. Is also able to import Cd(2+), but is not permeable to Co(2+), Cu(2+), Fe(2+), Mn(2+) and Ni(2+). The polypeptide is Zinc transporter ZIPB (Bordetella bronchiseptica (strain ATCC BAA-588 / NCTC 13252 / RB50) (Alcaligenes bronchisepticus)).